The primary structure comprises 1122 residues: Transcription-repair-coupling factor (1122 aa).

The Helicase ATP-binding domain maps to Asp593 to Ile758. Gly606 to Thr613 is a binding site for ATP. Positions Asp711 to Gln714 match the DEEQ box motif. The 155-residue stretch at Ile779–Asp933 folds into the Helicase C-terminal domain.

In the N-terminal section; belongs to the UvrB family. This sequence in the C-terminal section; belongs to the helicase family. RecG subfamily.

It localises to the cytoplasm. Its function is as follows. Couples transcription and DNA repair by recognizing RNA polymerase (RNAP) stalled at DNA lesions. Mediates ATP-dependent release of RNAP and its truncated transcript from the DNA, and recruitment of nucleotide excision repair machinery to the damaged site. The polypeptide is Transcription-repair-coupling factor (Rickettsia conorii (strain ATCC VR-613 / Malish 7)).